The following is a 517-amino-acid chain: MTSPEHSEDERQPLLTKPSGPDESQSGFGSSWIQFRKPSAMWLLPMYTLYAITAGSLIIPEFNATLGLICHQRHSPDNSDFQLALERCDGNTQVQSDLSQFYIYGTVLSGILGAIAGPNLMGFSDKIGRKPILLISVLGPLIADIIVLAALHYPDEVDVKWLLVGYAMDGLSGSIITATTASQAYISDISAPEDRVSSFSYIQAAFTSAFALGPLIAGGLLSVFDSLIQAYWLAFTIHLSLIVLFTLALPESLKSTAESRGTEENTTNQPKAEAEAGFFEVISSARGLIPSDRSSKTNMYIVAVTEAALFGVSMGLVPLQLAYSAYMFHWRSSAQSAFLTGVNLWSILVLVAVVPLFMSRIQRRQQAEGQSEGQPQTAFGPGELGTIRTCLLLQVAGYITIAVVHSPLGVIAGSLIAGSGAPLSPTLTSCLTKMVPEERQGVLLGAVSFLHAISRILLPSGMNYVYGSTVGTQPYALFALLGFGSGIFLVASMFIGNKSTLPDIPRFPYLMNYSSRS.

Residues 1–12 (MTSPEHSEDERQ) show a composition bias toward basic and acidic residues. The segment at 1–28 (MTSPEHSEDERQPLLTKPSGPDESQSGF) is disordered. Residues 40-60 (AMWLLPMYTLYAITAGSLIIP) form a helical membrane-spanning segment. Asparagine 63 is a glycosylation site (N-linked (GlcNAc...) asparagine). The next 5 helical transmembrane spans lie at 103 to 123 (IYGT…LMGF), 131 to 151 (PILL…LAAL), 161 to 181 (WLLV…ATTA), 204 to 224 (AAFT…LSVF), and 230 to 250 (AYWL…LALP). A glycan (N-linked (GlcNAc...) asparagine) is linked at asparagine 265. 5 helical membrane passes run 299-319 (MYIV…LVPL), 338-358 (FLTG…PLFM), 391-411 (LLLQ…LGVI), 442-462 (VLLG…PSGM), and 476-496 (ALFA…MFIG). 2 N-linked (GlcNAc...) asparagine glycosylation sites follow: asparagine 497 and asparagine 512.

The protein belongs to the major facilitator superfamily. TCR/Tet family.

It is found in the membrane. It functions in the pathway secondary metabolite biosynthesis. Functionally, MFS-type transporter; part of the cluster that mediates the biosynthesis of a highly modified cyclo-arginine-tryptophan dipeptide (cRW). The protein is MFS-type transporter avaJ of Aspergillus versicolor.